Here is a 103-residue protein sequence, read N- to C-terminus: Small ribosomal subunit protein uS10 (103 aa).

It belongs to the universal ribosomal protein uS10 family. As to quaternary structure, part of the 30S ribosomal subunit.

Functionally, involved in the binding of tRNA to the ribosomes. The chain is Small ribosomal subunit protein uS10 from Acinetobacter baylyi (strain ATCC 33305 / BD413 / ADP1).